Reading from the N-terminus, the 163-residue chain is UPF0134 protein MPN_139 (163 aa).

It belongs to the UPF0134 family.

This Mycoplasma pneumoniae (strain ATCC 29342 / M129 / Subtype 1) (Mycoplasmoides pneumoniae) protein is UPF0134 protein MPN_139.